Consider the following 582-residue polypeptide: Arginine--tRNA ligase (582 aa).

The 'HIGH' region motif lies at 128–138 (PNLAKEMHVGH).

It belongs to the class-I aminoacyl-tRNA synthetase family. Monomer.

The protein resides in the cytoplasm. The enzyme catalyses tRNA(Arg) + L-arginine + ATP = L-arginyl-tRNA(Arg) + AMP + diphosphate. The polypeptide is Arginine--tRNA ligase (Colwellia psychrerythraea (strain 34H / ATCC BAA-681) (Vibrio psychroerythus)).